The sequence spans 94 residues: Large ribosomal subunit protein bL27 (94 aa).

Residues 1-9 constitute a propeptide that is removed on maturation; the sequence is MLKLNLQFF.

The protein belongs to the bacterial ribosomal protein bL27 family. Post-translationally, the N-terminus is cleaved by ribosomal processing cysteine protease Prp.

This chain is Large ribosomal subunit protein bL27, found in Staphylococcus aureus (strain Mu3 / ATCC 700698).